Consider the following 446-residue polypeptide: MAPNTSTMDEAGLPAERDFSFRILTACFLSLLILSTLLGNTLVCAAVIRFRHLRSKVTNFFVISLAVSDLLVAVLVMPWKAVAEIAGFWPLGPFCNIWVAFDIMCSTASILNLCVISVDRYWAISSPFQYERKMTPKAAFILISVAWTLSVLISFIPVQLSWHKAKPTWPLDGNFTSLEDTEDDNCDTRLSRTYAISSSLISFYIPVAIMIVTYTSIYRIAQKQIRRISALERAAVHAKNCQTTAGNGNPVECAQSESSFKMSFKRETKVLKTLSVIMGVFVCCWLPFFISNCMVPFCGSEETQPFCIDSITFDVFVWFGWANSSLNPIIYAFNADFQKAFSTLLGCYRLCPTTNNAIETVSINNNGAVVFSSHHEPRGSISKDCNLVYLIPHAVGSSEDLKKEEAGGIAKPLEKLSPALSVILDYDTDVSLEKIQPVTHSGQHST.

Topologically, residues 1 to 22 (MAPNTSTMDEAGLPAERDFSFR) are extracellular. N-linked (GlcNAc...) asparagine glycosylation occurs at asparagine 4. The helical transmembrane segment at 23–48 (ILTACFLSLLILSTLLGNTLVCAAVI) threads the bilayer. Residues 49–59 (RFRHLRSKVTN) are Cytoplasmic-facing. The helical transmembrane segment at 60-86 (FFVISLAVSDLLVAVLVMPWKAVAEIA) threads the bilayer. Over 87–95 (GFWPLGPFC) the chain is Extracellular. An intrachain disulfide couples cysteine 95 to cysteine 186. A helical membrane pass occupies residues 96-118 (NIWVAFDIMCSTASILNLCVISV). The Cytoplasmic portion of the chain corresponds to 119-137 (DRYWAISSPFQYERKMTPK). A helical transmembrane segment spans residues 138-162 (AAFILISVAWTLSVLISFIPVQLSW). The Extracellular segment spans residues 163-192 (HKAKPTWPLDGNFTSLEDTEDDNCDTRLSR). Residues 193-218 (TYAISSSLISFYIPVAIMIVTYTSIY) traverse the membrane as a helical segment. Over 219–272 (RIAQKQIRRISALERAAVHAKNCQTTAGNGNPVECAQSESSFKMSFKRETKVLK) the chain is Cytoplasmic. The chain crosses the membrane as a helical span at residues 273–299 (TLSVIMGVFVCCWLPFFISNCMVPFCG). The Extracellular portion of the chain corresponds to 300–312 (SEETQPFCIDSIT). Residues 313–337 (FDVFVWFGWANSSLNPIIYAFNADF) form a helical membrane-spanning segment. The Cytoplasmic segment spans residues 338–446 (QKAFSTLLGC…PVTHSGQHST (109 aa)). S-palmitoyl cysteine attachment occurs at residues cysteine 347 and cysteine 351.

It belongs to the G-protein coupled receptor 1 family. In terms of assembly, interacts with DNAJC14 via its C-terminus PubMed:11331877. Interacts with DRD2. Interacts with DORIP1. In terms of processing, N-glycosylated. In terms of tissue distribution, brain, in the striatum, the nucleus accumbens, and the olfactory tubercle.

It localises to the cell membrane. The protein localises to the endoplasmic reticulum membrane. The protein resides in the cell projection. Its subcellular location is the dendrite. It is found in the cilium membrane. It localises to the dendritic spine. Functionally, dopamine receptor whose activity is mediated by G proteins which activate adenylyl cyclase. In Rattus norvegicus (Rat), this protein is D(1A) dopamine receptor (Drd1).